We begin with the raw amino-acid sequence, 309 residues long: MGINFDVSRPKARSSINMTTKFHTIGLIGKPHHPGTNQTLKRLHHWLTVQGYEVLVEERVASELGTNIIAVDLLEIGARCDLAIVVGGDGNMLGAARVLARFDVGVIGVNRGNLGFLTDLPPDAFEEALAKVLDGEFDTEHRFLLEAEVYRHGMLKASNTAVNEAVLHPGKIAHMIEFEVYIDNQFMYSQRADGMIVSTPTGSTAYALSAGGAILTPNLQALILVPMFPHTLSCRPIVVDACSTIKMVVSPENGENLEVSCDGHVHLAVLPGDEIIVRRSSEQLRLIHPKGHNYFHVLRSKLGWGSKLF.

Aspartate 89 functions as the Proton acceptor in the catalytic mechanism. NAD(+) contacts are provided by residues 89–90 (DG), 163–164 (NE), histidine 174, arginine 191, aspartate 193, and 204–209 (TAYALS).

It belongs to the NAD kinase family. A divalent metal cation is required as a cofactor.

The protein localises to the cytoplasm. It catalyses the reaction NAD(+) + ATP = ADP + NADP(+) + H(+). Involved in the regulation of the intracellular balance of NAD and NADP, and is a key enzyme in the biosynthesis of NADP. Catalyzes specifically the phosphorylation on 2'-hydroxyl of the adenosine moiety of NAD to yield NADP. In Shewanella sp. (strain ANA-3), this protein is NAD kinase.